A 113-amino-acid polypeptide reads, in one-letter code: Nucleoid-associated protein SAV_4556 (113 aa).

It belongs to the YbaB/EbfC family. As to quaternary structure, homodimer.

The protein resides in the cytoplasm. The protein localises to the nucleoid. Functionally, binds to DNA and alters its conformation. May be involved in regulation of gene expression, nucleoid organization and DNA protection. The polypeptide is Nucleoid-associated protein SAV_4556 (Streptomyces avermitilis (strain ATCC 31267 / DSM 46492 / JCM 5070 / NBRC 14893 / NCIMB 12804 / NRRL 8165 / MA-4680)).